The chain runs to 322 residues: uncharacterized protein (322 aa).

8 helical membrane-spanning segments follow: residues 7–27, 54–74, 87–107, 128–148, 162–182, 209–229, 249–269, and 287–307; these read IQKI…IGAI, AFAL…LAMF, FVGF…LSGS, IAFC…ITFV, FLSV…YLLI, IGLT…LLPG, GIIS…LFLL, and VIYY…FELL.

It to E.coli YbhN.

It is found in the cell membrane. This is an uncharacterized protein from Synechocystis sp. (strain ATCC 27184 / PCC 6803 / Kazusa).